We begin with the raw amino-acid sequence, 463 residues long: Chaperone SurA (463 aa).

Residues Met-1–Ala-25 form the signal peptide. PpiC domains are found at residues Gly-175–Glu-277 and Ala-291–Gly-390. The disordered stretch occupies residues Ala-439–His-463.

Its subcellular location is the periplasm. The enzyme catalyses [protein]-peptidylproline (omega=180) = [protein]-peptidylproline (omega=0). Its function is as follows. Chaperone involved in the correct folding and assembly of outer membrane proteins. Recognizes specific patterns of aromatic residues and the orientation of their side chains, which are found more frequently in integral outer membrane proteins. May act in both early periplasmic and late outer membrane-associated steps of protein maturation. The sequence is that of Chaperone SurA from Xylella fastidiosa (strain Temecula1 / ATCC 700964).